The primary structure comprises 367 residues: Flagellar P-ring protein (367 aa).

An N-terminal signal peptide occupies residues 1 to 21 (MYVFKALAGIVLALVATLAHA).

The protein belongs to the FlgI family. In terms of assembly, the basal body constitutes a major portion of the flagellar organelle and consists of four rings (L,P,S, and M) mounted on a central rod.

The protein resides in the periplasm. Its subcellular location is the bacterial flagellum basal body. Assembles around the rod to form the L-ring and probably protects the motor/basal body from shearing forces during rotation. This Salmonella paratyphi C (strain RKS4594) protein is Flagellar P-ring protein.